We begin with the raw amino-acid sequence, 82 residues long: Large ribosomal subunit protein bL27 (82 aa).

The interval methionine 1 to arginine 20 is disordered.

Belongs to the bacterial ribosomal protein bL27 family.

The chain is Large ribosomal subunit protein bL27 from Neorickettsia sennetsu (strain ATCC VR-367 / Miyayama) (Ehrlichia sennetsu).